Consider the following 215-residue polypeptide: Pyrrolidone-carboxylate peptidase (215 aa).

Active-site residues include Glu-80, Cys-143, and His-167.

The protein belongs to the peptidase C15 family. As to quaternary structure, homotetramer.

The protein resides in the cytoplasm. It carries out the reaction Release of an N-terminal pyroglutamyl group from a polypeptide, the second amino acid generally not being Pro.. Functionally, removes 5-oxoproline from various penultimate amino acid residues except L-proline. This Bacillus mycoides (strain KBAB4) (Bacillus weihenstephanensis) protein is Pyrrolidone-carboxylate peptidase.